Reading from the N-terminus, the 305-residue chain is GMP synthase [glutamine-hydrolyzing] subunit B (305 aa).

Residues 2 to 184 (VKPEKFIPKA…LQLPEEICER (183 aa)) enclose the GMPS ATP-PPase domain. 29 to 35 (SGGVDSS) is an ATP binding site.

In terms of assembly, heterodimer composed of a glutamine amidotransferase subunit (A) and a GMP-binding subunit (B).

It catalyses the reaction XMP + L-glutamine + ATP + H2O = GMP + L-glutamate + AMP + diphosphate + 2 H(+). It functions in the pathway purine metabolism; GMP biosynthesis; GMP from XMP (L-Gln route): step 1/1. In terms of biological role, catalyzes the synthesis of GMP from XMP. This Methanosarcina acetivorans (strain ATCC 35395 / DSM 2834 / JCM 12185 / C2A) protein is GMP synthase [glutamine-hydrolyzing] subunit B (guaAB).